The chain runs to 233 residues: MGQKVHRNGIRLGIVKPWNSTWFANTKEFADNLDSDFKVRQYLTKELAKASVSRIVIERPAKSIRVTIHTARPGIVIGKKGEDVEKLRKVVADIAGVPAQINIAEVRKPELDAKLVADSITSQLERRVMFRRAMKRAVQNAMRLGAKGIKVEVSGRLGGAEIARTEWYREGRVPLHTLRADIDYNTSEAHTTYGVIGVKVWIFKGEILGGMAAVEQPEKPAAQPKKQQRKGRK.

Positions Glu28 to Gly96 constitute a KH type-2 domain.

Belongs to the universal ribosomal protein uS3 family. Part of the 30S ribosomal subunit. Forms a tight complex with proteins S10 and S14.

Functionally, binds the lower part of the 30S subunit head. Binds mRNA in the 70S ribosome, positioning it for translation. This Shigella flexneri protein is Small ribosomal subunit protein uS3.